The chain runs to 633 residues: Proline-rich protein LAS17 (633 aa).

Residues leucine 16–alanine 127 enclose the WH1 domain. Disordered stretches follow at residues arginine 145 to aspartate 545 and alanine 563 to leucine 606. Residues alanine 192–threonine 215 show a composition bias toward low complexity. 2 stretches are compositionally biased toward pro residues: residues threonine 216 to serine 225 and serine 238 to asparagine 256. Composition is skewed to low complexity over residues serine 257 to serine 269 and proline 307 to arginine 322. Position 334 is a phosphothreonine (threonine 334). A Phosphoserine modification is found at serine 337. Pro residues predominate over residues proline 342 to proline 357. Polar residues-rich tracts occupy residues threonine 363 to leucine 376, asparagine 399 to arginine 414, and proline 454 to asparagine 465. A compositionally biased stretch (low complexity) spans glutamine 479–serine 488. Residues glycine 547–valine 567 form the WH2 domain. The residue at position 588 (serine 588) is a Phosphoserine.

Interacts with KRE6, LSB3, LSB5 and YSC84.

The polypeptide is Proline-rich protein LAS17 (LAS17) (Saccharomyces cerevisiae (strain ATCC 204508 / S288c) (Baker's yeast)).